The following is an 80-amino-acid chain: Defensin-like protein 13 (80 aa).

A signal peptide spans M1 to A29. A Pyrrolidone carboxylic acid modification is found at Q30. Disulfide bonds link C33–C80, C44–C65, C50–C74, and C54–C76.

It belongs to the DEFL family. As to quaternary structure, forms oligomers in its native state. Expressed predominantly in siliques and dry seeds.

It is found in the secreted. In terms of biological role, confers broad-spectrum resistance to pathogens. Possesses antifungal activity sensitive to inorganic cations in vitro. The chain is Defensin-like protein 13 (PDF1.1) from Arabidopsis thaliana (Mouse-ear cress).